Consider the following 121-residue polypeptide: Fumarate reductase subunit D (121 aa).

Transmembrane regions (helical) follow at residues glycine 22–leucine 42, alanine 57–tryptophan 77, and tyrosine 100–leucine 120.

The protein belongs to the FrdD family. As to quaternary structure, part of an enzyme complex containing four subunits: a flavoprotein (FrdA), an iron-sulfur protein (FrdB), and two hydrophobic anchor proteins (FrdC and FrdD).

It localises to the cell inner membrane. Functionally, anchors the catalytic components of the fumarate reductase complex to the cell membrane, binds quinones. The sequence is that of Fumarate reductase subunit D from Shewanella putrefaciens (strain CN-32 / ATCC BAA-453).